We begin with the raw amino-acid sequence, 1028 residues long: Sodium/potassium-transporting ATPase subunit alpha-4 (1028 aa).

The tract at residues 1–36 (MEPGKETAATSEQKPRPTLRASNTNRQPKVKRRKKD) is disordered. Residues 1–92 (MEPGKETAAT…NVLTPPPTTP (92 aa)) are Cytoplasmic-facing. Residues 87–89 (PPP) form an interaction with phosphoinositide-3 kinase region. A helical membrane pass occupies residues 93–113 (EWIKFCKQLFGGFSLLLWTGS). The Extracellular segment spans residues 114–137 (LLCFLAYGIHVSYYQENANKDNLY). Residues 138–158 (LGIVLSAVVIITGCFSYYQEA) traverse the membrane as a helical segment. At 159-294 (KSSKIMESFK…MGKTPIATEI (136 aa)) the chain is on the cytoplasmic side. The helical transmembrane segment at 295–314 (EHFIHIITAVAVFLGVTFFF) threads the bilayer. Over 315 to 326 (LSLILGYTWLDA) the chain is Extracellular. Residues 327 to 344 (VIFLIGIIVANVPEGLLA) form a helical membrane-spanning segment. Over 345–777 (TVTVCLTLTA…EEGRLIFDNL (433 aa)) the chain is Cytoplasmic. The active-site 4-aspartylphosphate intermediate is the D382. Mg(2+) contacts are provided by D722 and D726. A helical transmembrane segment spans residues 778-797 (KKSIAYTLTSNIPEITPFLL). The Extracellular portion of the chain corresponds to 798-807 (FIVLSIPLPL). Residues 808 to 828 (GTITILCIDLGTDMVPAISLA) form a helical membrane-spanning segment. The Cytoplasmic portion of the chain corresponds to 829–848 (YETPESDIMKRLPRNPKTDN). The helical transmembrane segment at 849–871 (LVNDRLIGMAYGQIGMIQALAGF) threads the bilayer. The Extracellular portion of the chain corresponds to 872-923 (FTYFVILAENGFKPLDLLGIRLYWDDTNLNDLEDTYGQQWTYEQRKVVEFTC). Residues 924–943 (QTAFFISIVIVQWADLIICK) form a helical membrane-spanning segment. Residues 944 to 956 (TRRNSLFKQGMKN) lie on the Cytoplasmic side of the membrane. The residue at position 948 (S948) is a Phosphoserine; by PKA. Residues 957 to 975 (KVLIFGLLEETILAACLSY) traverse the membrane as a helical segment. Topologically, residues 976–990 (IPGMDVALRMYPLKI) are extracellular. Residues 991 to 1011 (NWWFCALPYSVLIFIYDEVRK) traverse the membrane as a helical segment. Residues 1012 to 1028 (LIIRRRPGGWLEKETYY) are Cytoplasmic-facing.

This sequence belongs to the cation transport ATPase (P-type) (TC 3.A.3) family. Type IIC subfamily. As to quaternary structure, the sodium/potassium-transporting ATPase is composed of a catalytic alpha subunit, an auxiliary non-catalytic beta subunit and an additional regulatory subunit.

Its subcellular location is the cell membrane. It catalyses the reaction K(+)(out) + Na(+)(in) + ATP + H2O = K(+)(in) + Na(+)(out) + ADP + phosphate + H(+). Its activity is regulated as follows. Specifically inhibited by an endogenous cardiac glycoside, ouabain. This is the catalytic component of the active enzyme, which catalyzes the hydrolysis of ATP coupled with the exchange of sodium and potassium ions across the plasma membrane. This action creates the electrochemical gradient of sodium and potassium ions, providing the energy for active transport of various nutrients. Plays a role in sperm motility. This Rattus norvegicus (Rat) protein is Sodium/potassium-transporting ATPase subunit alpha-4 (Atp1a4).